Here is a 433-residue protein sequence, read N- to C-terminus: Histidinol dehydrogenase (433 aa).

Residues Y129, Q191, and N214 each coordinate NAD(+). 3 residues coordinate substrate: S237, Q259, and H262. Residues Q259 and H262 each contribute to the Zn(2+) site. Active-site proton acceptor residues include E326 and H327. Positions 327, 360, 414, and 419 each coordinate substrate. Residue D360 coordinates Zn(2+). Zn(2+) is bound at residue H419.

This sequence belongs to the histidinol dehydrogenase family. Zn(2+) serves as cofactor.

The catalysed reaction is L-histidinol + 2 NAD(+) + H2O = L-histidine + 2 NADH + 3 H(+). The protein operates within amino-acid biosynthesis; L-histidine biosynthesis; L-histidine from 5-phospho-alpha-D-ribose 1-diphosphate: step 9/9. Its function is as follows. Catalyzes the sequential NAD-dependent oxidations of L-histidinol to L-histidinaldehyde and then to L-histidine. This is Histidinol dehydrogenase from Methanosarcina mazei (strain ATCC BAA-159 / DSM 3647 / Goe1 / Go1 / JCM 11833 / OCM 88) (Methanosarcina frisia).